Consider the following 256-residue polypeptide: Acetyl-coenzyme A carboxylase carboxyl transferase subunit alpha (256 aa).

The CoA carboxyltransferase C-terminal domain occupies 1 to 236; that stretch reads MTDVARILKE…RSHLIDEITQ (236 aa).

It belongs to the AccA family. Acetyl-CoA carboxylase is a heterohexamer composed of biotin carboxyl carrier protein (AccB), biotin carboxylase (AccC) and two subunits each of ACCase subunit alpha (AccA) and ACCase subunit beta (AccD).

The protein resides in the cytoplasm. The enzyme catalyses N(6)-carboxybiotinyl-L-lysyl-[protein] + acetyl-CoA = N(6)-biotinyl-L-lysyl-[protein] + malonyl-CoA. It functions in the pathway lipid metabolism; malonyl-CoA biosynthesis; malonyl-CoA from acetyl-CoA: step 1/1. Component of the acetyl coenzyme A carboxylase (ACC) complex. First, biotin carboxylase catalyzes the carboxylation of biotin on its carrier protein (BCCP) and then the CO(2) group is transferred by the carboxyltransferase to acetyl-CoA to form malonyl-CoA. This is Acetyl-coenzyme A carboxylase carboxyl transferase subunit alpha from Streptococcus equi subsp. zooepidemicus (strain MGCS10565).